The following is an 81-amino-acid chain: ATP synthase subunit c (81 aa).

2 helical membrane-spanning segments follow: residues 14–34 and 60–80; these read YLGA…IGTV and LAFA…LLFV.

It belongs to the ATPase C chain family. In terms of assembly, F-type ATPases have 2 components, F(1) - the catalytic core - and F(0) - the membrane proton channel. F(1) has five subunits: alpha(3), beta(3), gamma(1), delta(1), epsilon(1). F(0) has three main subunits: a(1), b(2) and c(10-14). The alpha and beta chains form an alternating ring which encloses part of the gamma chain. F(1) is attached to F(0) by a central stalk formed by the gamma and epsilon chains, while a peripheral stalk is formed by the delta and b chains.

The protein localises to the cell membrane. Its function is as follows. F(1)F(0) ATP synthase produces ATP from ADP in the presence of a proton or sodium gradient. F-type ATPases consist of two structural domains, F(1) containing the extramembraneous catalytic core and F(0) containing the membrane proton channel, linked together by a central stalk and a peripheral stalk. During catalysis, ATP synthesis in the catalytic domain of F(1) is coupled via a rotary mechanism of the central stalk subunits to proton translocation. Functionally, key component of the F(0) channel; it plays a direct role in translocation across the membrane. A homomeric c-ring of between 10-14 subunits forms the central stalk rotor element with the F(1) delta and epsilon subunits. This is ATP synthase subunit c from Clostridium acetobutylicum (strain ATCC 824 / DSM 792 / JCM 1419 / IAM 19013 / LMG 5710 / NBRC 13948 / NRRL B-527 / VKM B-1787 / 2291 / W).